A 72-amino-acid polypeptide reads, in one-letter code: Tetrahydromethanopterin S-methyltransferase subunit G (72 aa).

Residues isoleucine 48–serine 68 traverse the membrane as a helical segment.

Belongs to the MtrG family. In terms of assembly, the complex is composed of 8 subunits; MtrA, MtrB, MtrC, MtrD, MtrE, MtrF, MtrG and MtrH.

The protein resides in the cell membrane. The catalysed reaction is 5-methyl-5,6,7,8-tetrahydromethanopterin + coenzyme M + 2 Na(+)(in) = 5,6,7,8-tetrahydromethanopterin + methyl-coenzyme M + 2 Na(+)(out). It functions in the pathway one-carbon metabolism; methanogenesis from CO(2); methyl-coenzyme M from 5,10-methylene-5,6,7,8-tetrahydromethanopterin: step 2/2. In terms of biological role, part of a complex that catalyzes the formation of methyl-coenzyme M and tetrahydromethanopterin from coenzyme M and methyl-tetrahydromethanopterin. This is an energy-conserving, sodium-ion translocating step. The protein is Tetrahydromethanopterin S-methyltransferase subunit G of Methanosarcina barkeri (strain Fusaro / DSM 804).